A 258-amino-acid chain; its full sequence is Acyl-[acyl-carrier-protein]--UDP-N-acetylglucosamine O-acyltransferase (258 aa).

This sequence belongs to the transferase hexapeptide repeat family. LpxA subfamily. Homotrimer.

It localises to the cytoplasm. The catalysed reaction is a (3R)-hydroxyacyl-[ACP] + UDP-N-acetyl-alpha-D-glucosamine = a UDP-3-O-[(3R)-3-hydroxyacyl]-N-acetyl-alpha-D-glucosamine + holo-[ACP]. It participates in glycolipid biosynthesis; lipid IV(A) biosynthesis; lipid IV(A) from (3R)-3-hydroxytetradecanoyl-[acyl-carrier-protein] and UDP-N-acetyl-alpha-D-glucosamine: step 1/6. In terms of biological role, involved in the biosynthesis of lipid A, a phosphorylated glycolipid that anchors the lipopolysaccharide to the outer membrane of the cell. In Neisseria meningitidis serogroup A / serotype 4A (strain DSM 15465 / Z2491), this protein is Acyl-[acyl-carrier-protein]--UDP-N-acetylglucosamine O-acyltransferase.